The sequence spans 379 residues: Cytochrome b (379 aa).

4 helical membrane-spanning segments follow: residues 33 to 53, 77 to 98, 113 to 133, and 178 to 198; these read FGSL…FLAM, WLIR…FIHV, WNIG…GYVL, and FFAF…VHLL. Heme b-binding residues include His83 and His97. His182 and His196 together coordinate heme b. Residue His201 participates in a ubiquinone binding. The next 4 membrane-spanning stretches (helical) occupy residues 226–246, 288–308, 320–340, and 347–367; these read TKDL…ALFF, LGGV…PLLN, VTQV…WIGG, and FTTI…ILIP.

This sequence belongs to the cytochrome b family. The cytochrome bc1 complex contains 11 subunits: 3 respiratory subunits (MT-CYB, CYC1 and UQCRFS1), 2 core proteins (UQCRC1 and UQCRC2) and 6 low-molecular weight proteins (UQCRH/QCR6, UQCRB/QCR7, UQCRQ/QCR8, UQCR10/QCR9, UQCR11/QCR10 and a cleavage product of UQCRFS1). This cytochrome bc1 complex then forms a dimer. It depends on heme b as a cofactor.

Its subcellular location is the mitochondrion inner membrane. Component of the ubiquinol-cytochrome c reductase complex (complex III or cytochrome b-c1 complex) that is part of the mitochondrial respiratory chain. The b-c1 complex mediates electron transfer from ubiquinol to cytochrome c. Contributes to the generation of a proton gradient across the mitochondrial membrane that is then used for ATP synthesis. This is Cytochrome b (MT-CYB) from Akodon montensis (Montane grass mouse).